A 1413-amino-acid chain; its full sequence is DNA-directed RNA polymerase subunit beta' (1413 aa).

Residues Cys-70, Cys-72, Cys-85, and Cys-88 each coordinate Zn(2+). Mg(2+) is bound by residues Asp-460, Asp-462, and Asp-464. Positions 819, 893, 900, and 903 each coordinate Zn(2+). The interval 1393 to 1413 (EAFEFGTPETPAAEQTPHTNE) is disordered.

Belongs to the RNA polymerase beta' chain family. The RNAP catalytic core consists of 2 alpha, 1 beta, 1 beta' and 1 omega subunit. When a sigma factor is associated with the core the holoenzyme is formed, which can initiate transcription. The cofactor is Mg(2+). Zn(2+) is required as a cofactor.

The catalysed reaction is RNA(n) + a ribonucleoside 5'-triphosphate = RNA(n+1) + diphosphate. In terms of biological role, DNA-dependent RNA polymerase catalyzes the transcription of DNA into RNA using the four ribonucleoside triphosphates as substrates. This is DNA-directed RNA polymerase subunit beta' from Paraburkholderia phymatum (strain DSM 17167 / CIP 108236 / LMG 21445 / STM815) (Burkholderia phymatum).